A 331-amino-acid chain; its full sequence is NADH-ubiquinone oxidoreductase chain 1 (331 aa).

8 helical membrane-spanning segments follow: residues leucine 8 to isoleucine 28, leucine 75 to proline 95, leucine 107 to glycine 127, isoleucine 147 to phenylalanine 167, serine 178 to alanine 198, glycine 224 to phenylalanine 244, phenylalanine 266 to valine 286, and methionine 308 to isoleucine 328.

It belongs to the complex I subunit 1 family.

It is found in the mitochondrion inner membrane. It carries out the reaction a ubiquinone + NADH + 5 H(+)(in) = a ubiquinol + NAD(+) + 4 H(+)(out). Core subunit of the mitochondrial membrane respiratory chain NADH dehydrogenase (Complex I) that is believed to belong to the minimal assembly required for catalysis. Complex I functions in the transfer of electrons from NADH to the respiratory chain. The immediate electron acceptor for the enzyme is believed to be ubiquinone. This is NADH-ubiquinone oxidoreductase chain 1 (ND1) from Mycosarcoma maydis (Corn smut fungus).